The primary structure comprises 997 residues: Protein argonaute 5 (997 aa).

Composition is skewed to gly residues over residues 1–16 (MSNRGGGGHGGASRGR) and 43–59 (GGRGGSVSAGRGRGNVG). A disordered region spans residues 1-144 (MSNRGGGGHG…TSLPPASSKA (144 aa)). Residues 93–106 (SVASSSKTVSVASS) show a composition bias toward low complexity. The segment covering 116–129 (VSETMSNLQITSTE) has biased composition (polar residues). A PAZ domain is found at 360–471 (VVTDFISKFL…LPMELCQIDE (112 aa)). Positions 638–958 (LLIVILPDVT…AAFRARYYME (321 aa)) constitute a Piwi domain. Positions 721 and 807 each coordinate a divalent metal cation. Interaction with guide RNA regions lie at residues 847-848 (KR), 893-901 (HAGIQGTSR), and 930-952 (YARCTKSVSIVPPAYYAHLAAFR). His947 contributes to the a divalent metal cation binding site.

Belongs to the argonaute family. Ago subfamily. Mg(2+) is required as a cofactor. It depends on Mn(2+) as a cofactor.

Involved in RNA-mediated post-transcriptional gene silencing (PTGS). Main component of the RNA-induced silencing complex (RISC) that binds to a short guide RNA such as a microRNA (miRNA) or small interfering RNA (siRNA). RISC uses the mature miRNA or siRNA as a guide for slicer-directed cleavage of homologous mRNAs to repress gene expression. Associates with siRNAs of various sizes, from 21-24 nucleotide in length and preferentially recruits small RNAs with a 5' terminal cytosine. Probably involved in antiviral RNA silencing. Associates with siRNAs derived from cucumber mosaic virus (CMV). Targeted by the turnip yellows virus (TuYV) protein P0 (via F-box-like domain) for probable proteasome degradation and thereby inactivating AGO5 function in RNA silencing. The protein is Protein argonaute 5 (AGO5) of Arabidopsis thaliana (Mouse-ear cress).